Reading from the N-terminus, the 272-residue chain is Dermonecrotic toxin StSicTox-betaIC1 (272 aa).

H5 is a catalytic residue. Residues E25 and D27 each contribute to the Mg(2+) site. H41 acts as the Nucleophile in catalysis. Disulfide bonds link C45–C51 and C47–C191. Residue D85 coordinates Mg(2+).

It belongs to the arthropod phospholipase D family. Class II subfamily. Class IIb sub-subfamily. The cofactor is Mg(2+). As to expression, expressed by the venom gland.

The protein resides in the secreted. It catalyses the reaction an N-(acyl)-sphingosylphosphocholine = an N-(acyl)-sphingosyl-1,3-cyclic phosphate + choline. The enzyme catalyses N-hexanoyl-sphing-4-enine-1-phosphocholine = N-(hexanoyl)-sphing-4-enine-1,3-cyclic phosphate + choline. It carries out the reaction an N-(acyl)-sphingosylphosphoethanolamine = an N-(acyl)-sphingosyl-1,3-cyclic phosphate + ethanolamine. The catalysed reaction is N-dodecanoyl-heptadecasphing-4-enine-1-phosphoethanolamine = N-dodecanoyl-heptadecasphing-4-enine-1,3-cyclic phosphate + ethanolamine. It catalyses the reaction a 1-acyl-sn-glycero-3-phosphoethanolamine = a 1-acyl-sn-glycero-2,3-cyclic phosphate + ethanolamine. The enzyme catalyses 1-tetradecanoyl-sn-glycero-3-phosphoethanolamine = 1-tetradecanoyl-sn-glycero-2,3-cyclic phosphate + ethanolamine. Its function is as follows. Dermonecrotic toxins cleave the phosphodiester linkage between the phosphate and headgroup of certain phospholipids (sphingolipid and lysolipid substrates), forming an alcohol (often choline) and a cyclic phosphate. This toxin acts on lysophosphatidylethanolamine (LPE) and ceramide phosphoethanolamine (CPE) with high activity. This toxin acts on sphingomyelin (SM) with very low activity and is not active on lysophosphatidylserine (LPS), lysophosphatidylcholine (LPC) and lysophosphatidylglycerol (LPG). It acts by transphosphatidylation, releasing exclusively cyclic phosphate as second products. It is not surprising that spider toxins have affinity for ethanolamine-containing sphingolipids since they are common in insect prey. Induces dermonecrosis, hemolysis, increased vascular permeability, edema, inflammatory response, and platelet aggregation. The protein is Dermonecrotic toxin StSicTox-betaIC1 of Sicarius terrosus (Cave spider).